An 824-amino-acid chain; its full sequence is 4-methylaminobutanoate oxidase (formaldehyde-forming) (824 aa).

At histidine 67 the chain carries Pros-8alpha-FAD histidine.

This sequence belongs to the GcvT family. It depends on FAD as a cofactor.

The enzyme catalyses 4-(methylamino)butanoate + O2 + H2O = 4-aminobutanoate + formaldehyde + H2O2. Its pathway is alkaloid degradation; nicotine degradation. Catalyzes the oxidative demethylation of 4-methylaminobutanoate produced from the pyrrolidine ring of nicotine. To a much lesser extent, can also use sarcosine as substrate, but is not active against dimethylglycine, methylaminopropionitrile, methylaminopropylamine, and alpha-methylaminobutanoate. The sequence is that of 4-methylaminobutanoate oxidase (formaldehyde-forming) (abo) from Paenarthrobacter nicotinovorans (Arthrobacter nicotinovorans).